The following is an 807-amino-acid chain: 85/88 kDa calcium-independent phospholipase A2 (807 aa).

Serine 13 carries the post-translational modification Phosphoserine. 9 ANK repeats span residues 120 to 147 (WTVTHLAVELGIRECFHHSRIISCANST), 151 to 181 (EGCTPLHLACRKGDSEILVELVQYCHAQMDV), 185 to 215 (KGETAFHYAVQGDNPQVLQLLGKNASAGLNQ), 219 to 248 (QGLTPLHLACKMGKQEMVRVLLLCNARCNI), 251 to 281 (PGGFPIHTAMKFSQKGCAEMIISMDSNQIHS), 286 to 312 (YGASPLHWAKNAEMARMLLKRGCDVDS), 316 to 345 (SGNTALHVAVMRNRFDCVMVLLTYGANAGA), 349 to 378 (HGNTPLHLAMSKDNMEMVKALIVFGAEVDT), and 382 to 403 (FGETPALIASKISKLITRKALL). A run of 2 helical transmembrane segments spans residues 481 to 501 (LLCLDGGGVKGLVIIQLLIAI) and 512 to 532 (LFDWVAGTSTGGILALAILHS). One can recognise a PNPLA domain in the interval 482 to 666 (LCLDGGGVKG…LANNPTLDAM (185 aa)). A GXGXXG motif is present at residues 486–491 (GGGVKG). The short motif at 518–522 (GTSTG) is the GXSXG element. Residue serine 520 is the Nucleophile of the active site. Aspartate 653 (proton acceptor) is an active-site residue. Positions 653-655 (DGG) match the DGA/G motif. A calmodulin-binding (1-9-14 motif) region spans residues 678–687 (RKGQGNKVKK). A calmodulin-binding (IQ motif) region spans residues 749 to 760 (AWCEMVGIQYFR).

In terms of assembly, homodimer formed by catalytic domains tightly interacting through a large hydrophobic interface. The contact area involves 3 alpha helices, several loops and a part of the beta sheet from each monomer. Both active sites of the dimer are in close proximity adopting an open conformation that provide sufficient space for phospholipid access and favoring cooperativity in deacylation-reacylation reactions. Each monomer has 9 ankyrin repeats stacked side-by-side in an elongated structure oriented outwards from the catalytic core. In terms of tissue distribution, expressed in neurons of central and peripheral nervous system. Highly expressed in Purkinje cells in cerebellum and dorsal and ventral horn neurons in the spinal cord. Expressed in testis (at protein level). Expressed in skeletal muscle (at protein level).

Its subcellular location is the cytoplasm. It localises to the cell membrane. The protein resides in the mitochondrion. It is found in the cell projection. The protein localises to the pseudopodium. It catalyses the reaction a 1,2-diacyl-sn-glycero-3-phosphocholine + H2O = a 1-acyl-sn-glycero-3-phosphocholine + a fatty acid + H(+). It carries out the reaction a 1-O-alkyl-2-acyl-sn-glycero-3-phosphocholine + H2O = a 1-O-alkyl-sn-glycero-3-phosphocholine + a fatty acid + H(+). The catalysed reaction is 1,2-dihexadecanoyl-sn-glycero-3-phosphocholine + H2O = 1-hexadecanoyl-sn-glycero-3-phosphocholine + hexadecanoate + H(+). The enzyme catalyses 1-hexadecanoyl-2-(9Z-octadecenoyl)-sn-glycero-3-phosphocholine + H2O = 1-hexadecanoyl-sn-glycero-3-phosphocholine + (9Z)-octadecenoate + H(+). It catalyses the reaction 1-hexadecanoyl-2-(9Z,12Z-octadecadienoyl)-sn-glycero-3-phosphocholine + H2O = (9Z,12Z)-octadecadienoate + 1-hexadecanoyl-sn-glycero-3-phosphocholine + H(+). It carries out the reaction 1-hexadecanoyl-2-(5Z,8Z,11Z,14Z-eicosatetraenoyl)-sn-glycero-3-phosphocholine + H2O = 1-hexadecanoyl-sn-glycero-3-phosphocholine + (5Z,8Z,11Z,14Z)-eicosatetraenoate + H(+). The catalysed reaction is 1-octadecanoyl-2-(5Z,8Z,11Z,14Z-eicosatetraenoyl)-sn-glycero-3-phosphocholine + H2O = 1-octadecanoyl-sn-glycero-3-phosphocholine + (5Z,8Z,11Z,14Z)-eicosatetraenoate + H(+). The enzyme catalyses 1-hexadecanoyl-2-(5Z,8Z,11Z,14Z-eicosatetraenoyl)-sn-glycero-3-phosphoethanolamine + H2O = 1-hexadecanoyl-sn-glycero-3-phosphoethanolamine + (5Z,8Z,11Z,14Z)-eicosatetraenoate + H(+). It catalyses the reaction 1,2-dihexadecanoyl-sn-glycero-3-phosphate + H2O = 1-hexadecanoyl-sn-glycero-3-phosphate + hexadecanoate + H(+). It carries out the reaction a 1-acyl-sn-glycero-3-phosphocholine + H2O = sn-glycerol 3-phosphocholine + a fatty acid + H(+). The catalysed reaction is 1-hexadecanoyl-sn-glycero-3-phosphocholine + H2O = sn-glycerol 3-phosphocholine + hexadecanoate + H(+). The enzyme catalyses 1-(5Z,8Z,11Z,14Z-eicosatetraenoyl)-sn-glycero-3-phosphocholine + H2O = sn-glycerol 3-phosphocholine + (5Z,8Z,11Z,14Z)-eicosatetraenoate + H(+). It catalyses the reaction 2-(5Z,8Z,11Z,14Z)-eicosatetraenoyl-sn-glycero-3-phosphocholine + H2O = sn-glycerol 3-phosphocholine + (5Z,8Z,11Z,14Z)-eicosatetraenoate + H(+). It carries out the reaction 1-O-hexadecyl-2-(5Z,8Z,11Z,14Z)-eicosatetraenoyl-sn-glycero-3-phosphocholine + H2O = 1-O-hexadecyl-sn-glycero-3-phosphocholine + (5Z,8Z,11Z,14Z)-eicosatetraenoate + H(+). The catalysed reaction is 1-O-hexadecyl-2-acetyl-sn-glycero-3-phosphocholine + H2O = 1-O-hexadecyl-sn-glycero-3-phosphocholine + acetate + H(+). The enzyme catalyses hexadecanoyl-CoA + H2O = hexadecanoate + CoA + H(+). It catalyses the reaction 1',3'-bis[1,2-di-(9Z-octadecenoyl)-sn-glycero-3-phospho]-glycerol + H2O = 1'-[1,2-di-(9Z-octadecenoyl)-sn-glycero-3-phospho]-3'-[1-(9Z-octadecenoyl)-sn-glycero-3-phospho]-glycerol + (9Z)-octadecenoate + H(+). It carries out the reaction 1'-[1,2-di-(9Z-octadecenoyl)-sn-glycero-3-phospho]-3'-[1-(9Z-octadecenoyl)-sn-glycero-3-phospho]-glycerol + H2O = 1',3'-bis-[1-(9Z-octadecenoyl)-sn-glycero-3-phospho]-glycerol + (9Z)-octadecenoate + H(+). The catalysed reaction is 1',3'-bis-[1,2-di-(9Z,12Z-octadecadienoyl)-sn-glycero-3-phospho]-glycerol + H2O = 1'-[1,2-di-(9Z,12Z-octadecadienoyl)-sn-glycero-3-phospho]-3'-[1-(9Z,12Z-octadecadienoyl)-sn-glycero-3-phospho]-glycerol + (9Z,12Z)-octadecadienoate + H(+). The enzyme catalyses 1-octadecanoyl-2-(15-hydroxy-(5Z,8Z,11Z,13E)-eicosatetraenoyl)-sn-glycero-3-phosphoethanolamine + H2O = 1-octadecanoyl-sn-glycero-3-phosphoethanolamine + 15-hydroxy-(5Z,8Z,11Z,13E)-eicosatetraenoate + H(+). Its activity is regulated as follows. Inhibited by calcium-activated calmodulin. Activated by ATP. Inhibited by bromoenol lactone (BEL). Calcium-independent phospholipase involved in phospholipid remodeling with implications in cellular membrane homeostasis, mitochondrial integrity and signal transduction. Hydrolyzes the ester bond of the fatty acyl group attached at sn-1 or sn-2 position of phospholipids (phospholipase A1 and A2 activity respectively), producing lysophospholipids that are used in deacylation-reacylation cycles. Hydrolyzes both saturated and unsaturated long fatty acyl chains in various glycerophospholipid classes such as phosphatidylcholines, phosphatidylethanolamines and phosphatidates, with a preference for hydrolysis at sn-2 position. Can further hydrolyze lysophospholipids carrying saturated fatty acyl chains (lysophospholipase activity). Upon oxidative stress, contributes to remodeling of mitochondrial phospholipids in pancreatic beta cells, in a repair mechanism to reduce oxidized lipid content. Preferentially hydrolyzes oxidized polyunsaturated fatty acyl chains from cardiolipins, yielding monolysocardiolipins that can be reacylated with unoxidized fatty acyls to regenerate native cardiolipin species. Hydrolyzes oxidized glycerophosphoethanolamines present in pancreatic islets, releasing oxidized polyunsaturated fatty acids such as hydroxyeicosatetraenoates (HETEs). Has thioesterase activity toward fatty-acyl CoA releasing CoA-SH known to facilitate fatty acid transport and beta-oxidation in mitochondria particularly in skeletal muscle. Plays a role in regulation of membrane dynamics and homeostasis. Selectively hydrolyzes sn-2 arachidonoyl group in plasmalogen phospholipids, structural components of lipid rafts and myelin. Regulates F-actin polymerization at the pseudopods, which is required for both speed and directionality of MCP1/CCL2-induced monocyte chemotaxis. Targets membrane phospholipids to produce potent lipid signaling messengers. Generates lysophosphatidate (LPA, 1-acyl-glycerol-3-phosphate), which acts via G-protein receptors in various cell types. Has phospholipase A2 activity toward platelet-activating factor (PAF, 1-O-alkyl-2-acetyl-sn-glycero-3-phosphocholine), likely playing a role in inactivation of this potent pro-inflammatory signaling lipid. In response to glucose, amplifies calcium influx in pancreatic beta cells to promote INS secretion. This is 85/88 kDa calcium-independent phospholipase A2 (Pla2g6) from Mus musculus (Mouse).